Reading from the N-terminus, the 227-residue chain is NDR1/HIN1-like protein 10 (227 aa).

Residues 42–62 (VKVIISLIVILGVAALIFWLI) traverse the membrane as a helical segment. 2 N-linked (GlcNAc...) asparagine glycosylation sites follow: Asn138 and Asn210.

Expressed in senescing leaves.

The protein localises to the cell membrane. May play a role in plant immunity. This is NDR1/HIN1-like protein 10 from Arabidopsis thaliana (Mouse-ear cress).